Reading from the N-terminus, the 68-residue chain is DNA-directed RNA polymerase subunit Rpo10 (68 aa).

C7, C10, C44, and C45 together coordinate Zn(2+).

This sequence belongs to the archaeal Rpo10/eukaryotic RPB10 RNA polymerase subunit family. As to quaternary structure, part of the RNA polymerase complex. Requires Zn(2+) as cofactor.

It localises to the cytoplasm. The catalysed reaction is RNA(n) + a ribonucleoside 5'-triphosphate = RNA(n+1) + diphosphate. Its function is as follows. DNA-dependent RNA polymerase (RNAP) catalyzes the transcription of DNA into RNA using the four ribonucleoside triphosphates as substrates. This chain is DNA-directed RNA polymerase subunit Rpo10, found in Methanococcus vannielii (strain ATCC 35089 / DSM 1224 / JCM 13029 / OCM 148 / SB).